The primary structure comprises 172 residues: MRLTSKGRYAVTAMLDVALHSQDGPVPLADISERQGISLSYLEQLFSRLRKAGLVASVRGPGGGYRLGEDANDIAVGMVIAAVDESVDATKCHGKADCQGGVRCLTHTLWHDLSSRISGFLNNITLGELMRDNNVQEISGRQDQVLSNSSLRTSFGHKKTHDSTTIGVDVRS.

Positions 2–131 (RLTSKGRYAV…NNITLGELMR (130 aa)) constitute an HTH rrf2-type domain. Residues 28 to 51 (LADISERQGISLSYLEQLFSRLRK) constitute a DNA-binding region (H-T-H motif). Residues cysteine 92, cysteine 98, and cysteine 104 each coordinate [2Fe-2S] cluster.

[2Fe-2S] cluster serves as cofactor.

Its function is as follows. Regulates the transcription of several operons and genes involved in the biogenesis of Fe-S clusters and Fe-S-containing proteins. The protein is HTH-type transcriptional regulator IscR of Photobacterium profundum (strain SS9).